The chain runs to 1365 residues: Zinc finger protein 423 (1365 aa).

The span at 1–11 (MSRRKQAKPRS) shows a compositional bias: basic residues. The interval 1-69 (MSRRKQAKPR…SHDERVGEED (69 aa)) is disordered. Residues 37 to 51 (VSERDSDRKESRAVG) are compositionally biased toward basic and acidic residues. Residues 76–98 (FTCDNCQQDFECLADLTEHRTNH) form a C2H2-type 1 zinc finger. Residues 99-126 (CPADGDDDPGLSWVASSPSSKDVASPSQ) form a disordered region. Over residues 112-126 (VASSPSSKDVASPSQ) the composition is skewed to low complexity. 4 consecutive C2H2-type zinc fingers follow at residues 150–172 (YPCQ…EQIH), 178–200 (FKCT…VKLH), 206–228 (YSCQ…LKTH), and 234–256 (FKCS…MQAH). The disordered stretch occupies residues 250 to 280 (QSHMQAHRKNKEHLAKKDQGKRDGSSSDVTE). Basic and acidic residues predominate over residues 261–274 (EHLAKKDQGKRDGS). 3 C2H2-type zinc fingers span residues 286–309 (YMCD…LTQH), 318–341 (LQCI…DRTH), and 346–368 (HKCP…LDSH). The disordered stretch occupies residues 366–429 (DSHRQPDSSN…LAPSSDHDDG (64 aa)). Over residues 386-400 (SVASMSSATPDSSAS) the composition is skewed to low complexity. The C2H2-type 9; degenerate zinc-finger motif lies at 437–461 (YSCPYCSKRDFNSLAVLEIHLKTIH). 3 C2H2-type zinc fingers span residues 469 to 492 (HTCQ…RKAH), 513 to 536 (FHCN…RVSH), and 555 to 578 (FFCN…QQTH). The C2H2-type 13; atypical zinc finger occupies 603-628 (YSCPYCTNSPIFGSLLKLTKHIKENH). 7 C2H2-type zinc fingers span residues 675 to 697 (YPCN…LKSH), 705 to 728 (QSCP…LTIH), 736 to 759 (YVCE…LDMH), 764 to 787 (YHCT…AVKH), 794 to 817 (YRCT…KHSH), 831 to 853 (RKCI…ITTH), and 857 to 880 (YNCR…REKH). The span at 885–895 (GGNGNGNGGSQ) shows a compositional bias: gly residues. The disordered stretch occupies residues 885–916 (GGNGNGNGGSQNGTPNGVTQSSKRSTAGSTAA). The segment covering 902–913 (VTQSSKRSTAGS) has biased composition (polar residues). The segment at 954–976 (YACDICGAAYTMESLLQNHRLRD) adopts a C2H2-type 21; degenerate zinc-finger fold. 8 consecutive C2H2-type zinc fingers follow at residues 1000–1022 (HKCN…AQTH), 1029–1051 (YMCP…KVTH), 1090–1112 (FRCV…GTFH), 1201–1224 (LRCS…QVDH), 1249–1271 (YQCI…VANH), 1279–1301 (HECK…LIEH), 1310–1333 (FKCP…FAVH), and 1340–1363 (YDCS…LSQH).

Belongs to the krueppel C2H2-type zinc-finger protein family.

It is found in the nucleus. Transcription factor that can both act as an activator or a repressor depending on the context. Plays a central role in BMP signaling and olfactory neurogenesis. Associates with SMADs in response to bmp2 leading to activate transcription of BMP target genes. Acts as a transcriptional repressor involved in terminal olfactory receptor neurons differentiation. Involved in olfactory neurogenesis by participating in a developmental switch that regulates the transition from differentiation to maturation in olfactory receptor neurons. In Danio rerio (Zebrafish), this protein is Zinc finger protein 423 (znf423).